Consider the following 225-residue polypeptide: tRNA 2'-phosphotransferase 1 (225 aa).

A disordered region spans residues 1–21; it reads MDCETRGRGRRGRGNRNEESR.

Belongs to the KptA/TPT1 family.

The enzyme catalyses 2'-phospho-[ligated tRNA] + NAD(+) = mature tRNA + ADP-alpha-D-ribose 1'',2''-cyclic phosphate + nicotinamide. Catalyzes the last step of tRNA splicing, the transfer of the splice junction 2'-phosphate from ligated tRNA to NAD to produce ADP-ribose 1''-2'' cyclic phosphate. The polypeptide is tRNA 2'-phosphotransferase 1 (trpt1) (Danio rerio (Zebrafish)).